The sequence spans 123 residues: Small ribosomal subunit protein bS16 (123 aa).

Belongs to the bacterial ribosomal protein bS16 family.

The protein is Small ribosomal subunit protein bS16 of Treponema pallidum (strain Nichols).